The following is a 403-amino-acid chain: MSSYLFTSESVSEGHPDKVADQISDAVLDAILVQDPRARVACETMVKTGVAIIAGEITTSAWVDLEALTRKVIVDIGYNSSDVGFDGATCGVLNLIGKQSPDINQGVDRKKAEEQGAGDQGLMFGYATNETDSYMPAAIHISHRLVEQQAKIRKKSNSLLPWLRPDAKAQITLRYEDGVASAIDAVVLSTQHDPGIKQKDLVEAVREEILKPVLPSKWLHKGTKFHINPTGKFVIGGPVGDCGLTGRKIIVDTYGGSARHGGGAFSGKDPSKVDRSASYAVRYVAKNVVAAGLADRCEVQVSYAIGVAEPISISVTTFGTGKIPDDKIEKLICQHFDLRPYGIIKMLDLIHPIYQPSASYGHFGRKPRELAYTNSNGERVVATAFSWEKIDKAEVLRADAKLE.

H15 is a binding site for ATP. D17 serves as a coordination point for Mg(2+). E43 serves as a coordination point for K(+). Residues E56 and Q99 each coordinate L-methionine. The segment at 99-109 is flexible loop; that stretch reads QSPDINQGVDR. ATP is bound by residues 166–168, 232–233, D241, 247–248, A264, and K268; these read DAK, KF, and RK. D241 lines the L-methionine pocket. K272 contacts L-methionine.

It belongs to the AdoMet synthase family. In terms of assembly, homotetramer; dimer of dimers. Requires Mg(2+) as cofactor. K(+) serves as cofactor.

It localises to the cytoplasm. It carries out the reaction L-methionine + ATP + H2O = S-adenosyl-L-methionine + phosphate + diphosphate. Its pathway is amino-acid biosynthesis; S-adenosyl-L-methionine biosynthesis; S-adenosyl-L-methionine from L-methionine: step 1/1. Its function is as follows. Catalyzes the formation of S-adenosylmethionine (AdoMet) from methionine and ATP. The overall synthetic reaction is composed of two sequential steps, AdoMet formation and the subsequent tripolyphosphate hydrolysis which occurs prior to release of AdoMet from the enzyme. The polypeptide is S-adenosylmethionine synthase (Xylella fastidiosa (strain Temecula1 / ATCC 700964)).